Consider the following 427-residue polypeptide: MSFRDLRNFTEMMRALGYPRLISMENFRSPNFPLVAEILIWLVKRYEPQMEIPSDVDTESDRVFFIKAVAQFMATKAHVKLNLKRLYQADGYAVKEMLKITSILYNAMKTKENAGGDQNNDENSKFKFDLGSKIADLKLARQLGSEITAKGAALFDLLGQEEDLRESRTAAIARPLEITETERAMRAAVKDVTESIQMTKDLLNNVSSDEASLEAKIEKKKQDLERNQKRLQTLQSVRPAFMDEYEKIEEDLEKQYQTYVEKYRNLSFLEQQLDDYHRVEQERFEEAEMAMKMRQNKLKEEEKRLMRSGVARDEDSDVDIPEDEGSDSDIDDGQQARPHHPRHTQISGRGGARFIGSMRGGDSEETEDSEIDVDDDDEDDDEDGEEDEEENEDLDEDNDSLEGSSGKPGRTNQSLHPQILEESDNDF.

The stretch at 202-307 (LLNNVSSDEA…LKEEEKRLMR (106 aa)) forms a coiled coil. Basic and acidic residues predominate over residues 300–313 (EEEKRLMRSGVARD). The interval 300-427 (EEEKRLMRSG…QILEESDNDF (128 aa)) is disordered. Composition is skewed to acidic residues over residues 314 to 332 (EDSDVDIPEDEGSDSDIDD) and 363 to 400 (SEETEDSEIDVDDDDEDDDEDGEEDEEENEDLDEDNDS).

This sequence belongs to the CLUAP1 family.

Its subcellular location is the nucleus. It is found in the cell projection. The protein resides in the cilium. Its function is as follows. Required for cilia biogenesis and maintenance in the kidney, the lateral line organ and eye. Appears to function within the multiple intraflagellar transport complex B (IFT-B). This chain is Clusterin-associated protein 1 homolog (cluap1), found in Danio rerio (Zebrafish).